An 831-amino-acid polypeptide reads, in one-letter code: MSGWRKIYYKLLNLPLKLLVKSKVIPADPVSELGLDPSRPILYVLPYNSKADLLTLRAQCLAQDLPDPLIPLEIDGVQLPSHVFIENGPRVFRYYVPKQESVKLFHDYLDLHRNNPALDIQMLPVSVMFGRSPGREGHGTPHLRVLNGVQKFFAVLWLGRDSFVRFSTTVSLRRMASEHGTDKTIAHKLARVARMHFSRQRLAAVGPSLPARQDLFKKLLASKAIEKAVADEARSKKISHEKAQQNAITLMEEIAANFSYEAVRLSDRVLSWTWNRLYQGINVHNAERVRQLAQDGHEIVYVPCHRSHMDYLLLSYVLYHQGLVPPHIAAGINLNFWPAGPIFRRLGAFFIRRTFKGNKLYSTVFREYLGELFTRGYSVEYFVEGGRSRTGRLLEPKTGTLSMTIQAMLRGGTRPITLVPIYIGYEHVMEVGTYAKELRGAIKEKENLLQMLRGLRKLRNLGQGYVNFGEPLPLTTYLNTHVPQWRDAIDPIEAQRPSWLTPAVNDLANQIMVRINNAAAANAMNLCSTALLASRQRSLTREQLLEQLDCYLQLMRNAPYAKDTTVPDKTPEELLNHALNMNKFEVEKDTIGDIIILPREQAVLMTYYRNNIQHLLILPSLIASMVMYHRRITRTELLHKISMIYPMLKAELFLHYSKEQLPETLDTLIDELARQQLICDKGSELVLNPARIRPLQLLAAGVRETLQRYAITLSLLSATPSINRGALEKESRIMAQRLSVLHGINAPEFFDKAVFSTLVATLREEGYISDSGDAIQEHTLEVYNMLSALMTPEVKLTIESVSMPAETSNQPEAPETPETPETPEPEGKTES.

The HXXXXD motif motif lies at 304–309 (CHRSHM). The tract at residues 801 to 831 (VSMPAETSNQPEAPETPETPETPEPEGKTES) is disordered.

The protein belongs to the GPAT/DAPAT family.

It localises to the cell inner membrane. The enzyme catalyses sn-glycerol 3-phosphate + an acyl-CoA = a 1-acyl-sn-glycero-3-phosphate + CoA. Its pathway is phospholipid metabolism; CDP-diacylglycerol biosynthesis; CDP-diacylglycerol from sn-glycerol 3-phosphate: step 1/3. This Yersinia pseudotuberculosis serotype IB (strain PB1/+) protein is Glycerol-3-phosphate acyltransferase.